A 101-amino-acid chain; its full sequence is Large ribosomal subunit protein uL24 (101 aa).

The protein belongs to the universal ribosomal protein uL24 family. As to quaternary structure, part of the 50S ribosomal subunit.

Its function is as follows. One of two assembly initiator proteins, it binds directly to the 5'-end of the 23S rRNA, where it nucleates assembly of the 50S subunit. In terms of biological role, one of the proteins that surrounds the polypeptide exit tunnel on the outside of the subunit. The protein is Large ribosomal subunit protein uL24 of Streptococcus suis (strain 98HAH33).